A 469-amino-acid chain; its full sequence is Ribulose bisphosphate carboxylase large chain (469 aa).

Residue lysine 5 is modified to N6,N6,N6-trimethyllysine. Asparagine 114 and threonine 164 together coordinate substrate. Lysine 166 (proton acceptor) is an active-site residue. Lysine 168 contacts substrate. Mg(2+) contacts are provided by lysine 192, aspartate 194, and glutamate 195. An N6-carboxylysine modification is found at lysine 192. Histidine 285 serves as the catalytic Proton acceptor. Positions 286, 318, and 370 each coordinate substrate.

Belongs to the RuBisCO large chain family. Type I subfamily. In terms of assembly, heterohexadecamer of 8 large chains and 8 small chains; disulfide-linked. The disulfide link is formed within the large subunit homodimers. The cofactor is Mg(2+). Post-translationally, the disulfide bond which can form in the large chain dimeric partners within the hexadecamer appears to be associated with oxidative stress and protein turnover.

The protein resides in the plastid. Its subcellular location is the chloroplast. The catalysed reaction is 2 (2R)-3-phosphoglycerate + 2 H(+) = D-ribulose 1,5-bisphosphate + CO2 + H2O. The enzyme catalyses D-ribulose 1,5-bisphosphate + O2 = 2-phosphoglycolate + (2R)-3-phosphoglycerate + 2 H(+). Functionally, ruBisCO catalyzes two reactions: the carboxylation of D-ribulose 1,5-bisphosphate, the primary event in carbon dioxide fixation, as well as the oxidative fragmentation of the pentose substrate in the photorespiration process. Both reactions occur simultaneously and in competition at the same active site. The protein is Ribulose bisphosphate carboxylase large chain of Fleroya rubrostipulata (Mitragyna rubrostipulata).